The chain runs to 426 residues: 3-phosphoshikimate 1-carboxyvinyltransferase (426 aa).

Lys22, Ser23, and Arg27 together coordinate 3-phosphoshikimate. Position 22 (Lys22) interacts with phosphoenolpyruvate. The phosphoenolpyruvate site is built by Gly96 and Arg124. 3-phosphoshikimate-binding residues include Ser170, Ser171, Gln172, Ser198, Asp314, Asn337, and Lys341. Residue Gln172 participates in phosphoenolpyruvate binding. Asp314 functions as the Proton acceptor in the catalytic mechanism. Residues Arg345, Arg387, and Lys412 each contribute to the phosphoenolpyruvate site.

This sequence belongs to the EPSP synthase family. In terms of assembly, monomer.

The protein resides in the cytoplasm. The catalysed reaction is 3-phosphoshikimate + phosphoenolpyruvate = 5-O-(1-carboxyvinyl)-3-phosphoshikimate + phosphate. It functions in the pathway metabolic intermediate biosynthesis; chorismate biosynthesis; chorismate from D-erythrose 4-phosphate and phosphoenolpyruvate: step 6/7. Catalyzes the transfer of the enolpyruvyl moiety of phosphoenolpyruvate (PEP) to the 5-hydroxyl of shikimate-3-phosphate (S3P) to produce enolpyruvyl shikimate-3-phosphate and inorganic phosphate. In Photobacterium damsela subsp. piscicida (Pasteurella piscicida), this protein is 3-phosphoshikimate 1-carboxyvinyltransferase.